Consider the following 156-residue polypeptide: Transcriptional repressor NrdR (156 aa).

A zinc finger lies at 3–34 (CPFCGSMDTRVLDSRPTLDGAAIRRRRECISC). The 91-residue stretch at 49–139 (VLVIKKDGRR…VYRDFREVDQ (91 aa)) folds into the ATP-cone domain.

The protein belongs to the NrdR family. It depends on Zn(2+) as a cofactor.

In terms of biological role, negatively regulates transcription of bacterial ribonucleotide reductase nrd genes and operons by binding to NrdR-boxes. The chain is Transcriptional repressor NrdR from Thermotoga neapolitana (strain ATCC 49049 / DSM 4359 / NBRC 107923 / NS-E).